Here is a 747-residue protein sequence, read N- to C-terminus: Superkiller protein 7 (747 aa).

Residues 14–51 are disordered; the sequence is KSKGLLSADQSHSTSKSASLLERLHKNRETKDNNAETK. Over residues 21 to 31 the composition is skewed to polar residues; the sequence is ADQSHSTSKSA. Residues 35–51 show a composition bias toward basic and acidic residues; that stretch reads ERLHKNRETKDNNAETK. Phosphoserine is present on residues Ser88 and Ser90. A disordered region spans residues 89–117; the sequence is NSDLEKQGKSVTLDSKENELPTKRKSPDD. Residues 265-503 enclose the tr-type G domain; the sequence is PLNLTCLFLG…YVPEWYEGPT (239 aa). The interval 274–281 is G1; that stretch reads GDTNAGKS. 274 to 281 provides a ligand contact to GTP; that stretch reads GDTNAGKS. Positions 331-335 are G2; sequence GFSMF. Residues 356–359 form a G3 region; that stretch reads DTPG. GTP is bound by residues 356-360 and 427-430; these read DTPGS and NKAD. The tract at residues 427-430 is G4; it reads NKAD. A G5 region spans residues 467–469; sequence SGL.

This sequence belongs to the TRAFAC class translation factor GTPase superfamily. Classic translation factor GTPase family. As to quaternary structure, interacts with the exosome and with the SKI complex composed of at least SKI2, SKI3 and SKI8. Interacts directly with SKI3 and SKI8.

It is found in the cytoplasm. Its function is as follows. Represses the expression of non-poly(A) mRNAs like L-A or M viruses and is therefore involved in antiviral system. Mediates interactions via its N-terminus between the exosome and the SKI complex which operate in the 3'-to-5' mRNA-decay pathway. By interacting with NAM7, is also required for nonsense-mediated 3'-to-5' mRNA-decay (NMD). May recognize a stalled 80S ribosome at the 3'-end of a nonstop mRNA which leads to the recruitment of the exosome and SKI complexes to the mRNAs to be degraded. The sequence is that of Superkiller protein 7 (SKI7) from Saccharomyces cerevisiae (strain ATCC 204508 / S288c) (Baker's yeast).